A 705-amino-acid chain; its full sequence is FAD-dependent monooxygenase ATEG_03635 (705 aa).

Residues 86–115 (DVLI…IVDK), valine 208, 308–310 (RFY), and serine 408 contribute to the FAD site.

The protein belongs to the PheA/TfdB FAD monooxygenase family. FAD is required as a cofactor.

Its pathway is secondary metabolite biosynthesis. In terms of biological role, FAD-dependent monooxygenase; part of the cluster A that mediates the biosynthesis of azasperpyranones, members of the azaphilone family that exhibit anti-cancer activities. Azasperpyranones are synthesized by 2 clusters, A and B. Cluster A is responsible for the production of the polyhydric phenol moiety while the azaphilonoid scaffold is produced by the cluster B. The non-reducing polyketide synthase ATEG_03629 produces 5-methyl orsellinic acid, which is then reduced to 5-methyl orsellinic aldehyde by the NRPS-like protein ATEG_03630. 5-methyl orsellinic aldehyde is then first hydroxylated by the FAD-dependent monooxygenase ATEG_03635 and subsequently hydroxylated by the cytochrome P450 monooxygenase ATEG_03631 to produce the unstable polyhydric phenol precursor of azasperpyranones. On the other hand, the polyketide synthase ATEG_07659 is responsible for producing the 3,5-dimethyloctadienone moiety from acetyl-CoA, three malonyl-CoA, and two S-adenosyl methionines (SAM). The 3,5-dimethyloctadienone moiety is then loaded onto the SAT domain of ATEG_07661 and extended with four malonyl-CoA and one SAM, which leads to the formation of 2,4-dihydroxy-6-(5,7-dimethyl-2-oxo-trans-3-trans-5-nonadienyl)-3-methylbenzaldehyde (compound 8) after reductive release and aldol condensation. The FAD-dependent monooxygenase ATEG_07662 is the next enzyme in the biosynthesis sequence and hydroxylates the side chain at the benzylic position of compound 8. In Aspergillus nidulans, afoF, the ortholog of the FAD-dependent oxygenase ATEG_07660, is the key enzyme for the biosynthesis of asperfuranone by catalyzing the hydroxylation at C-8 of to prevent the formation of a six-membered ring hemiacetal intermediate and thus facilitating the formation of a five-membered ring to produce asperfuranone. In Aspergillus terreus, ATEG_07660 is probably not functional, which leads to the formation of the six-membered ring hemiacetal intermediate presperpyranone instead of asperfuranone. Finally, ATEG_03636 is involved in the condensation of the polyhydric phenol moiety produced by cluster A and the perasperpyranone precursor produced by cluster B, to yield azasperpyranone A. Further modifications of azasperpyranone A result in the production of derivatives, including azasperpyranone B to F. The polypeptide is FAD-dependent monooxygenase ATEG_03635 (Aspergillus terreus (strain NIH 2624 / FGSC A1156)).